The following is a 308-amino-acid chain: Adipolin (308 aa).

Positions 1–21 are cleaved as a signal peptide; the sequence is MWAWGWAAAALLWLQTAGAGA. Positions 36–119 are disordered; sequence DSPNITTSNR…PPGSPGVGVT (84 aa). The N-linked (GlcNAc...) asparagine glycan is linked to Asn39. Over residues 82–93 the composition is skewed to basic residues; sequence RKRCRGRDKKSR. Residues 99-113 are compositionally biased toward pro residues; the sequence is PGPPGPPGPPGPPGS. The 156-residue stretch at 153–308 folds into the C1q domain; it reads QRLVVEAFYC…SSFSGMLLGT (156 aa).

It belongs to the adipolin/erythroferrone family. Homomultimer; disulfide-linked. Adipolin fC1QTNF12: homotrimer; disulfide-linked. Adipolin gC1QTNF12: homodimer; disulfide-linked. May interact with ERFE. In terms of processing, processed into Adipolin fC1QTNF12 and Adipolin gC1QTNF12 by FURIN. Insulin enhances endogenous C1QTNF12 cleavage. In terms of tissue distribution, widely expressed, with high expression in subcutaneous and epididymal white adipose tissues and brown adipose tissue. Expressed in adipocytes (at protein level).

The protein resides in the secreted. Functionally, insulin-sensitizing adipocyte-secreted protein (adipokine) that regulates glucose metabolism in liver and adipose tissue. Promotes glucose uptake in adipocytes and suppresses de novo glucose production in hepatocytes via the PI3K-Akt signaling pathway. Administration lead to reduction of blood glucose. Able to attenuate inflammation in fat tissue. In terms of biological role, acts by activating the Akt signaling in hepatocytes and adipocytes. Not able to increase insulin-stimulated glucose uptake in adipocytes. Its function is as follows. Acts by activating the MAP kinase. Increases insulin-stimulated glucose uptake in adipocytes. The chain is Adipolin (C1qtnf12) from Mus musculus (Mouse).